Here is a 212-residue protein sequence, read N- to C-terminus: Thymidylate kinase (212 aa).

13 to 20 (GLEGAGKS) is a binding site for ATP.

Belongs to the thymidylate kinase family.

It catalyses the reaction dTMP + ATP = dTDP + ADP. Phosphorylation of dTMP to form dTDP in both de novo and salvage pathways of dTTP synthesis. This Legionella pneumophila (strain Paris) protein is Thymidylate kinase.